A 315-amino-acid chain; its full sequence is THO complex subunit 3 (315 aa).

WD repeat units follow at residues 18 to 57 (GHKK…HSKA), 64 to 104 (GHTD…CTQQ), 106 to 145 (ELSG…PLHR), 189 to 228 (AHTA…CLRT), 231 to 270 (KLEW…TVHQ), and 272 to 311 (PCRA…RIFG).

The protein belongs to the THOC3 family. In terms of assembly, component of the THO complex, which is composed of THO1, THO2, THO3, THO5, THO6 and THO7.

It localises to the nucleus. Functionally, acts as a component of the THO subcomplex of the TREX complex which is thought to couple mRNA transcription, processing and nuclear export. Contributes to the integrity of the endogenous trans-acting small interfering RNA (ta-siRNA) pathway. May process or transport a long RNA molecule so that it can be a template for secondary siRNA production. May participate in the trafficking of siRNA precursors to the ARGONAUTE catalytic center. Required for the generation of functional messenger ribonucleoproteins (mRNPs). The polypeptide is THO complex subunit 3 (THO3) (Arabidopsis thaliana (Mouse-ear cress)).